A 195-amino-acid chain; its full sequence is Imidazoleglycerol-phosphate dehydratase (195 aa).

The protein belongs to the imidazoleglycerol-phosphate dehydratase family.

It is found in the cytoplasm. It catalyses the reaction D-erythro-1-(imidazol-4-yl)glycerol 3-phosphate = 3-(imidazol-4-yl)-2-oxopropyl phosphate + H2O. Its pathway is amino-acid biosynthesis; L-histidine biosynthesis; L-histidine from 5-phospho-alpha-D-ribose 1-diphosphate: step 6/9. This Geobacter sp. (strain M21) protein is Imidazoleglycerol-phosphate dehydratase.